We begin with the raw amino-acid sequence, 110 residues long: Large ribosomal subunit protein uL22 (110 aa).

It belongs to the universal ribosomal protein uL22 family. In terms of assembly, part of the 50S ribosomal subunit.

Functionally, this protein binds specifically to 23S rRNA; its binding is stimulated by other ribosomal proteins, e.g. L4, L17, and L20. It is important during the early stages of 50S assembly. It makes multiple contacts with different domains of the 23S rRNA in the assembled 50S subunit and ribosome. The globular domain of the protein is located near the polypeptide exit tunnel on the outside of the subunit, while an extended beta-hairpin is found that lines the wall of the exit tunnel in the center of the 70S ribosome. This chain is Large ribosomal subunit protein uL22, found in Pasteurella multocida (strain Pm70).